We begin with the raw amino-acid sequence, 436 residues long: ATP-dependent protease ATPase subunit HslU (436 aa).

Residues I18, 60-65 (GVGKTE), D249, E314, and R386 contribute to the ATP site.

It belongs to the ClpX chaperone family. HslU subfamily. In terms of assembly, a double ring-shaped homohexamer of HslV is capped on each side by a ring-shaped HslU homohexamer. The assembly of the HslU/HslV complex is dependent on binding of ATP.

It localises to the cytoplasm. Its function is as follows. ATPase subunit of a proteasome-like degradation complex; this subunit has chaperone activity. The binding of ATP and its subsequent hydrolysis by HslU are essential for unfolding of protein substrates subsequently hydrolyzed by HslV. HslU recognizes the N-terminal part of its protein substrates and unfolds these before they are guided to HslV for hydrolysis. The protein is ATP-dependent protease ATPase subunit HslU of Ruegeria sp. (strain TM1040) (Silicibacter sp.).